A 464-amino-acid polypeptide reads, in one-letter code: Siroheme synthase (464 aa).

The interval 1 to 203 is precorrin-2 dehydrogenase /sirohydrochlorin ferrochelatase; that stretch reads MDYLPLFHNL…GQETEAERLL (203 aa). NAD(+)-binding positions include 22–23 and 43–44; these read EI and PQ. S128 bears the Phosphoserine mark. Positions 216–464 are uroporphyrinogen-III C-methyltransferase; the sequence is GEVYLVGAGP…AWFEGRQSAD (249 aa). Residue P225 participates in S-adenosyl-L-methionine binding. D248 serves as the catalytic Proton acceptor. The active-site Proton donor is K270. Residues 301 to 303, I306, 331 to 332, M383, and G412 each bind S-adenosyl-L-methionine; these read GGD and TA.

In the N-terminal section; belongs to the precorrin-2 dehydrogenase / sirohydrochlorin ferrochelatase family. It in the C-terminal section; belongs to the precorrin methyltransferase family.

It catalyses the reaction uroporphyrinogen III + 2 S-adenosyl-L-methionine = precorrin-2 + 2 S-adenosyl-L-homocysteine + H(+). The catalysed reaction is precorrin-2 + NAD(+) = sirohydrochlorin + NADH + 2 H(+). The enzyme catalyses siroheme + 2 H(+) = sirohydrochlorin + Fe(2+). It functions in the pathway cofactor biosynthesis; adenosylcobalamin biosynthesis; precorrin-2 from uroporphyrinogen III: step 1/1. It participates in cofactor biosynthesis; adenosylcobalamin biosynthesis; sirohydrochlorin from precorrin-2: step 1/1. The protein operates within porphyrin-containing compound metabolism; siroheme biosynthesis; precorrin-2 from uroporphyrinogen III: step 1/1. Its pathway is porphyrin-containing compound metabolism; siroheme biosynthesis; siroheme from sirohydrochlorin: step 1/1. It functions in the pathway porphyrin-containing compound metabolism; siroheme biosynthesis; sirohydrochlorin from precorrin-2: step 1/1. Functionally, multifunctional enzyme that catalyzes the SAM-dependent methylations of uroporphyrinogen III at position C-2 and C-7 to form precorrin-2 via precorrin-1. Then it catalyzes the NAD-dependent ring dehydrogenation of precorrin-2 to yield sirohydrochlorin. Finally, it catalyzes the ferrochelation of sirohydrochlorin to yield siroheme. This is Siroheme synthase from Azotobacter vinelandii (strain DJ / ATCC BAA-1303).